A 245-amino-acid polypeptide reads, in one-letter code: Probable transcriptional regulatory protein BF2589 (245 aa).

The tract at residues 225 to 245 (EDEDVQNVYTNMKPADNEGEE) is disordered.

It belongs to the TACO1 family.

It localises to the cytoplasm. The polypeptide is Probable transcriptional regulatory protein BF2589 (Bacteroides fragilis (strain ATCC 25285 / DSM 2151 / CCUG 4856 / JCM 11019 / LMG 10263 / NCTC 9343 / Onslow / VPI 2553 / EN-2)).